The primary structure comprises 601 residues: Leucine zipper putative tumor suppressor 1 (601 aa).

Gly-2 is lipidated: N-myristoyl glycine. A disordered region spans residues 135-190 (GAILHSSPESTNHQLHPMPPDKPKEQELKPGLCSGALSDSGRNSMSSLPTHSTTSS). A compositionally biased stretch (basic and acidic residues) spans 153 to 162 (PPDKPKEQEL). The span at 174 to 190 (SGRNSMSSLPTHSTTSS) shows a compositional bias: polar residues. A coiled-coil region spans residues 255–573 (PLSTDECTIQ…RLEKALQQLA (319 aa)).

Belongs to the LZTS family. Binds EEF1G, TLK2 and CDK1. Phosphorylated on serine residues. Hyperphosphorylated by the cAMP-dependent kinase PKA during cell-cycle progression. Highly expressed in brain, in particular in cortex, the CA2 region of the hippocampus, olfactory bulb, striatum and pons. Not detectable in the other tissues tested.

It is found in the cytoplasm. It localises to the cell membrane. Its subcellular location is the cell projection. The protein localises to the dendritic spine. The protein resides in the postsynaptic density. It is found in the synapse. In terms of biological role, involved in the regulation of cell growth. May stabilize the active CDC2-cyclin B1 complex and thereby contribute to the regulation of the cell cycle and the prevention of uncontrolled cell proliferation. May act as tumor suppressor. In Rattus norvegicus (Rat), this protein is Leucine zipper putative tumor suppressor 1 (Lzts1).